The following is a 610-amino-acid chain: MWTFPVDYDVIVIGAGHAGCEAAYCAAKMGASVLLLTSNLDTIAKLSCNPAVGGIGKGHIVREIDALGGIMAEITDLSGIQFRILNQTKGPAVRAPRAQVDKQLYHIHMKRLLEQVPGLHIMQGTAEALLDNGEKVLGVSTKEGWAYLGKTVVLSSGTFMRGLIHIGTQNFSGGRLGDAASLGLSEDLKRLGFPLGRLKTGTPARLLASSIDFSVMEEQPGDHNVCFVHRNEMFVPTLPQVSCHITHTTDQTKDLITKNLHRSALYGGRIEGVGPRYCPSIEDKIVKFADKDRHHIFIEPEGLNTQEVYVNGLSTSMPFDVQYDIIRSVSGLENAIITRPAYAIEYDYVHGNVIFPSLESKLIEGLFLCGQINGTTGYEEAAAQGLIAGVNAVNKVLRHPPFVPSRQESYIGVMLDDLTTQVLDEPYRMFTSRAEHRLLLRQDNAGMRLSHYGHSLGLLSSERYAMFQEQKACIEQEKERLSKTFRKYGDTVVPLTKVLCRPEVSYQQLLTEFPADVRDLGPVVGASLEMEIKYSGYISRQQTLIRSMERSENISIPEDIDYHSISALSLEAREKLSKFTPRTIGSAARISGISVADIQVLMVSLKKDAH.

An FAD-binding site is contributed by 14-19 (GAGHAG). Position 274–288 (274–288 (GPRYCPSIEDKIVKF)) interacts with NAD(+).

Belongs to the MnmG family. In terms of assembly, homodimer. Heterotetramer of two MnmE and two MnmG subunits. The cofactor is FAD.

Its subcellular location is the cytoplasm. NAD-binding protein involved in the addition of a carboxymethylaminomethyl (cmnm) group at the wobble position (U34) of certain tRNAs, forming tRNA-cmnm(5)s(2)U34. This is tRNA uridine 5-carboxymethylaminomethyl modification enzyme MnmG from Chlamydia trachomatis serovar D (strain ATCC VR-885 / DSM 19411 / UW-3/Cx).